The following is a 116-amino-acid chain: Iron-sulfur cluster insertion protein ErpA (116 aa).

Iron-sulfur cluster-binding residues include C44, C108, and C110.

It belongs to the HesB/IscA family. As to quaternary structure, homodimer. It depends on iron-sulfur cluster as a cofactor.

Its function is as follows. Required for insertion of 4Fe-4S clusters for at least IspG. The sequence is that of Iron-sulfur cluster insertion protein ErpA from Aeromonas hydrophila subsp. hydrophila (strain ATCC 7966 / DSM 30187 / BCRC 13018 / CCUG 14551 / JCM 1027 / KCTC 2358 / NCIMB 9240 / NCTC 8049).